The chain runs to 282 residues: MKGSPFEKVALSDVSFTIPSGSFTAIIGHTGSGKSTLAQHFNGLLRPSKGTVRLGELEITADQKPPSLKEIRRKVGLVFQYPEHQLFEETVEKDICFGPMNYGVSEARAKKRAKELLHLVGLPDTYLQASPFSLSGGQMRRVAIAGVLAMEPDVLVLDEPTAGLDPEGQRLIMDMFYRLHQEKELTTVLVTHNMSDAAKFADQIIVMSQGNVAMTGDRQTVFARADELVALGLDVPETLQLLLQVKERFGLHDVPPLFSLEELADFLAKELQQKEGQPCSKI.

Residues 1–234 (MKGSPFEKVA…ADELVALGLD (234 aa)) form the ABC transporter domain. Residue 28-35 (GHTGSGKS) participates in ATP binding.

Belongs to the ABC transporter superfamily. Energy-coupling factor EcfA family. Forms a stable energy-coupling factor (ECF) transporter complex composed of 2 membrane-embedded substrate-binding proteins (S component), 2 ATP-binding proteins (A component) and 2 transmembrane proteins (T component).

It localises to the cell membrane. Its function is as follows. ATP-binding (A) component of a common energy-coupling factor (ECF) ABC-transporter complex. Unlike classic ABC transporters this ECF transporter provides the energy necessary to transport a number of different substrates. In Halalkalibacterium halodurans (strain ATCC BAA-125 / DSM 18197 / FERM 7344 / JCM 9153 / C-125) (Bacillus halodurans), this protein is Energy-coupling factor transporter ATP-binding protein EcfA2.